We begin with the raw amino-acid sequence, 476 residues long: Cysteine--tRNA ligase (476 aa).

Cysteine 30 serves as a coordination point for Zn(2+). Positions proline 32–asparagine 42 match the 'HIGH' region motif. Zn(2+)-binding residues include cysteine 215, histidine 240, and glutamate 244. Residues lysine 274–serine 278 carry the 'KMSKS' region motif. Lysine 277 serves as a coordination point for ATP.

This sequence belongs to the class-I aminoacyl-tRNA synthetase family. Monomer. It depends on Zn(2+) as a cofactor.

It is found in the cytoplasm. The catalysed reaction is tRNA(Cys) + L-cysteine + ATP = L-cysteinyl-tRNA(Cys) + AMP + diphosphate. The protein is Cysteine--tRNA ligase of Lactobacillus helveticus (strain DPC 4571).